The following is a 465-amino-acid chain: Cysteine--tRNA ligase (465 aa).

Position 29 (C29) interacts with Zn(2+). The 'HIGH' region signature appears at 31–41 (PTVYNYIHIGN). The Zn(2+) site is built by C209, H234, and E238. Residues 266–270 (KMSKS) carry the 'KMSKS' region motif. K269 contributes to the ATP binding site. Residue S270 is modified to Phosphoserine.

This sequence belongs to the class-I aminoacyl-tRNA synthetase family. In terms of assembly, monomer. The cofactor is Zn(2+).

The protein resides in the cytoplasm. It carries out the reaction tRNA(Cys) + L-cysteine + ATP = L-cysteinyl-tRNA(Cys) + AMP + diphosphate. The sequence is that of Cysteine--tRNA ligase from Bacillus cereus (strain AH187).